The primary structure comprises 240 residues: MTSKKVILVALSGCSSSGKTTIAKLTASLFTKATLIHEDDFYKHDNEVPVDAKYNIQNWDSPEALDFKLFGKELDVIKQTGKIATKLIHNNNVDDPFTKFHIDRQVWDELKAKYDSINDDKYEVVIVDGFMIFNNTGISKKFDLKILVRAPYEVLKKRRASRKGYQTLDSFWVDPPYYFDEFVYESYRANHAQLFVNGDVEGLLDPRKSKNIKEFINDDDTPIAKPLSWVCQEILKLCKD.

ATP is bound at residue Gly-13–Thr-21. Thr-20 and Asp-39 together coordinate Mg(2+). The active-site Proton acceptor is Asp-39. Residues Asp-39–Tyr-42 and Trp-59–Asp-60 contribute to the substrate site. Arg-158 lines the ATP pocket. Residues Arg-159 and Gly-164 to Tyr-165 contribute to the substrate site. ATP is bound by residues Arg-162–Gly-164 and Lys-208–Lys-210.

It belongs to the uridine kinase family. NRK subfamily.

It carries out the reaction beta-nicotinamide D-riboside + ATP = beta-nicotinamide D-ribonucleotide + ADP + H(+). It catalyses the reaction beta-D-ribosylnicotinate + ATP = nicotinate beta-D-ribonucleotide + ADP + H(+). The protein operates within cofactor biosynthesis; NAD(+) biosynthesis. Its function is as follows. Catalyzes the phosphorylation of nicotinamide riboside (NR) and nicotinic acid riboside (NaR) to form nicotinamide mononucleotide (NMN) and nicotinic acid mononucleotide (NaMN). The protein is Nicotinamide riboside kinase (NRK1) of Saccharomyces cerevisiae (strain ATCC 204508 / S288c) (Baker's yeast).